A 115-amino-acid polypeptide reads, in one-letter code: MNLILMMILISSLISTILAIVAFWLPQMNPDMEKLSPYECGFDPLGSARLPFSMRFFLVAILFLLFDLEIALLLPLPWSTHLDPTLMLMWAFTIIILLTIGLIYEWLQGGLEWAE.

The next 3 helical transmembrane spans lie at 3–23 (LILM…IVAF), 56–76 (FFLV…LLPL), and 84–104 (PTLM…GLIY).

This sequence belongs to the complex I subunit 3 family.

Its subcellular location is the mitochondrion membrane. It carries out the reaction a ubiquinone + NADH + 5 H(+)(in) = a ubiquinol + NAD(+) + 4 H(+)(out). Core subunit of the mitochondrial membrane respiratory chain NADH dehydrogenase (Complex I) that is believed to belong to the minimal assembly required for catalysis. Complex I functions in the transfer of electrons from NADH to the respiratory chain. The immediate electron acceptor for the enzyme is believed to be ubiquinone. This Polypterus ornatipinnis (Ornate bichir) protein is NADH-ubiquinone oxidoreductase chain 3 (MT-ND3).